Here is a 422-residue protein sequence, read N- to C-terminus: MTNQLFDAYFTAPAMREIFSDRGRLQGMLDFEAALARAEAAAGLVPHSAVAAIEAACKAERYDVGALANAIATAGNSAIPLVKALGKVIASGVPEAERYVHLGATSQDAMDTGLVLQLRDALDLIEADLGKLADTLSQQALKHADTPMVGRTWLQHATPVTLGMKLAGVLGALTRHRQRLQELGPPCWCCSSGGASGSLAALGSKAMPVAEALAEQLKLSLPEQPWHTQRDRLVEFASVLGLVAGSLGKFGRDVSLLMQTEAGEVFEPSAPGKGGSSTMPHKRNPVGAAVLIGAATRVPGLVSTLFAAMPQEHERSLGLWHAEWETLPDICCLVSGALRQAQVIAEGIEVDAARMRRNLDLTQGLVLAEAVSIVLARTLGRDRAHHLLEQCCQRAVAEQRHLRAVLGDDPQVSAELSAEELD.

This sequence belongs to the class-II fumarase/aspartase family. As to quaternary structure, homotetramer.

Its subcellular location is the cytoplasm. The catalysed reaction is 2-(carboxymethyl)-5-oxo-2,5-dihydro-2-furoate = 3-carboxy-cis,cis-muconate + H(+). The protein operates within aromatic compound metabolism; beta-ketoadipate pathway; 5-oxo-4,5-dihydro-2-furylacetate from 3-carboxy-cis,cis-muconate: step 1/2. Catalyzes an anti cycloisomerization. This Pseudomonas putida (Arthrobacter siderocapsulatus) protein is 3-carboxy-cis,cis-muconate cycloisomerase (pcaB).